The sequence spans 431 residues: Adenylosuccinate synthetase (431 aa).

GTP is bound by residues 13-19 (GDEGKGK) and 41-43 (GHT). The active-site Proton acceptor is the Asp14. Positions 14 and 41 each coordinate Mg(2+). Residues 14-17 (DEGK), 39-42 (NAGH), Thr130, Arg144, Gln225, Thr240, and Arg304 each bind IMP. His42 serves as the catalytic Proton donor. 300–306 (ATTGRKR) contributes to the substrate binding site. Residues Arg306, 332–334 (KLD), and 415–417 (STG) contribute to the GTP site.

The protein belongs to the adenylosuccinate synthetase family. In terms of assembly, homodimer. Mg(2+) serves as cofactor.

It localises to the cytoplasm. The enzyme catalyses IMP + L-aspartate + GTP = N(6)-(1,2-dicarboxyethyl)-AMP + GDP + phosphate + 2 H(+). It participates in purine metabolism; AMP biosynthesis via de novo pathway; AMP from IMP: step 1/2. Plays an important role in the de novo pathway of purine nucleotide biosynthesis. Catalyzes the first committed step in the biosynthesis of AMP from IMP. The chain is Adenylosuccinate synthetase from Shewanella amazonensis (strain ATCC BAA-1098 / SB2B).